Reading from the N-terminus, the 317-residue chain is uncharacterized protein (317 aa).

This is an uncharacterized protein from Borreliella burgdorferi (strain ATCC 35210 / DSM 4680 / CIP 102532 / B31) (Borrelia burgdorferi).